The chain runs to 1196 residues: [NU+] prion formation protein 1 (1196 aa).

Disordered stretches follow at residues 1–49 and 103–125; these read MPPK…KSSY and TYKQ…STTS. 2 stretches are compositionally biased toward polar residues: residues 39–49 and 103–113; these read GSNNASKKSSY and TYKQSAVTPNQ. Low complexity predominate over residues 114-125; that stretch reads SGTPTPSASTTS. Ser-443 carries the post-translational modification Phosphoserine. ABC transporter domains lie at 570-786 and 812-1129; these read IEIV…YYTL and AKMT…ADAV. Residues 604–611 and 846–853 each bind ATP; these read GRNGAGKS and GPNGAGKS. The Chromo domain occupies 942-1003; the sequence is RAIEAIVGRQ…HEASREGLGY (62 aa). Disordered regions lie at residues 1137 to 1166 and 1177 to 1196; these read AKPS…EKKL and EWLS…DEED. Thr-1191 bears the Phosphothreonine mark.

The protein belongs to the ABC transporter superfamily. ABCF family. EF3 subfamily.

The protein resides in the cytoplasm. Its subcellular location is the nucleus. In terms of biological role, may be involved in the mRNA export process. Forms the [NU+] prion and induces [PSI+] prion formation. The sequence is that of [NU+] prion formation protein 1 (NEW1) from Saccharomyces cerevisiae (strain ATCC 204508 / S288c) (Baker's yeast).